The sequence spans 184 residues: NADH-quinone oxidoreductase subunit B (184 aa).

Residues C37, C38, C103, and C132 each contribute to the [4Fe-4S] cluster site.

The protein belongs to the complex I 20 kDa subunit family. NDH-1 is composed of 14 different subunits. Subunits NuoB, C, D, E, F, and G constitute the peripheral sector of the complex. The cofactor is [4Fe-4S] cluster.

It localises to the cell membrane. It catalyses the reaction a quinone + NADH + 5 H(+)(in) = a quinol + NAD(+) + 4 H(+)(out). Functionally, NDH-1 shuttles electrons from NADH, via FMN and iron-sulfur (Fe-S) centers, to quinones in the respiratory chain. The immediate electron acceptor for the enzyme in this species is believed to be a menaquinone. Couples the redox reaction to proton translocation (for every two electrons transferred, four hydrogen ions are translocated across the cytoplasmic membrane), and thus conserves the redox energy in a proton gradient. The protein is NADH-quinone oxidoreductase subunit B of Mycobacterium sp. (strain JLS).